The following is a 334-amino-acid chain: N-acetyl-gamma-glutamyl-phosphate reductase (334 aa).

Cys-154 is an active-site residue.

This sequence belongs to the NAGSA dehydrogenase family. Type 1 subfamily.

The protein localises to the cytoplasm. It carries out the reaction N-acetyl-L-glutamate 5-semialdehyde + phosphate + NADP(+) = N-acetyl-L-glutamyl 5-phosphate + NADPH + H(+). It participates in amino-acid biosynthesis; L-arginine biosynthesis; N(2)-acetyl-L-ornithine from L-glutamate: step 3/4. Catalyzes the NADPH-dependent reduction of N-acetyl-5-glutamyl phosphate to yield N-acetyl-L-glutamate 5-semialdehyde. This is N-acetyl-gamma-glutamyl-phosphate reductase from Salmonella typhimurium (strain LT2 / SGSC1412 / ATCC 700720).